Here is a 261-residue protein sequence, read N- to C-terminus: Tryptophan synthase alpha chain (261 aa).

Catalysis depends on proton acceptor residues glutamate 47 and aspartate 58.

Belongs to the TrpA family. In terms of assembly, tetramer of two alpha and two beta chains.

The enzyme catalyses (1S,2R)-1-C-(indol-3-yl)glycerol 3-phosphate + L-serine = D-glyceraldehyde 3-phosphate + L-tryptophan + H2O. It participates in amino-acid biosynthesis; L-tryptophan biosynthesis; L-tryptophan from chorismate: step 5/5. In terms of biological role, the alpha subunit is responsible for the aldol cleavage of indoleglycerol phosphate to indole and glyceraldehyde 3-phosphate. The polypeptide is Tryptophan synthase alpha chain (Neisseria meningitidis serogroup B (strain ATCC BAA-335 / MC58)).